The chain runs to 150 residues: Propanediol utilization protein PduV (150 aa).

Residues 1 to 42 (MKRIMLIGPSQCGKTSLTQCMRGEALHYQKTQAIVWSPTTID) form a targets protein to the BMC region. 8–15 (GPSQCGKT) is a binding site for GTP.

It belongs to the EutP/PduV family. Interacts with PduU, probably via the PduU beta-barrel which is predicted by modeling to be on the exterior of the BMC.

The protein resides in the bacterial microcompartment. It participates in polyol metabolism; 1,2-propanediol degradation. Functionally, may play a role in the spatial distribution of the bacterial microcompartment (BMC) dedicated to 1,2-PD degradation, perhaps being involved in cytoskeleton dynamics; might bind GTP. This subunit is directly targeted to the BMC. Its function is as follows. Expression of a cosmid containing the full 21-gene pdu operon in E.coli allows E.coli to grow on 1,2-propanediol (1,2-PD) with the appearance of bacterial microcompartments (BMC) in its cytoplasm. In terms of biological role, the 1,2-PD-specific bacterial microcompartment (BMC) concentrates low levels of 1,2-PD catabolic enzymes, concentrates volatile reaction intermediates thus enhancing pathway flux and keeps the level of toxic, mutagenic propionaldehyde low. This chain is Propanediol utilization protein PduV, found in Citrobacter freundii.